Here is a 251-residue protein sequence, read N- to C-terminus: Phosphoribosylaminoimidazole-succinocarboxamide synthase (251 aa).

The protein belongs to the SAICAR synthetase family.

The enzyme catalyses 5-amino-1-(5-phospho-D-ribosyl)imidazole-4-carboxylate + L-aspartate + ATP = (2S)-2-[5-amino-1-(5-phospho-beta-D-ribosyl)imidazole-4-carboxamido]succinate + ADP + phosphate + 2 H(+). Its pathway is purine metabolism; IMP biosynthesis via de novo pathway; 5-amino-1-(5-phospho-D-ribosyl)imidazole-4-carboxamide from 5-amino-1-(5-phospho-D-ribosyl)imidazole-4-carboxylate: step 1/2. In Ruegeria pomeroyi (strain ATCC 700808 / DSM 15171 / DSS-3) (Silicibacter pomeroyi), this protein is Phosphoribosylaminoimidazole-succinocarboxamide synthase.